A 410-amino-acid polypeptide reads, in one-letter code: Peptidase T (410 aa).

Histidine 78 contacts Zn(2+). Aspartate 80 is a catalytic residue. A Zn(2+)-binding site is contributed by aspartate 140. Residue glutamate 173 is the Proton acceptor of the active site. Glutamate 174, aspartate 196, and histidine 379 together coordinate Zn(2+).

It belongs to the peptidase M20B family. Zn(2+) is required as a cofactor.

It is found in the cytoplasm. The enzyme catalyses Release of the N-terminal residue from a tripeptide.. Cleaves the N-terminal amino acid of tripeptides. This chain is Peptidase T, found in Pectobacterium atrosepticum (strain SCRI 1043 / ATCC BAA-672) (Erwinia carotovora subsp. atroseptica).